The following is a 109-amino-acid chain: T cell receptor alpha variable 26-2 (109 aa).

The signal sequence occupies residues 1–19 (MKLVTSITVLLSLGIMGDA). Residues 20-109 (KTTQPNSMES…AAVYYCILRD (90 aa)) enclose the Ig-like domain. A disulfide bond links C39 and C105. N40 is a glycosylation site (N-linked (GlcNAc...) asparagine).

In terms of assembly, alpha-beta TR is a heterodimer composed of an alpha and beta chain; disulfide-linked. The alpha-beta TR is associated with the transmembrane signaling CD3 coreceptor proteins to form the TR-CD3 (TcR or TCR). The assembly of alpha-beta TR heterodimers with CD3 occurs in the endoplasmic reticulum where a single alpha-beta TR heterodimer associates with one CD3D-CD3E heterodimer, one CD3G-CD3E heterodimer and one CD247 homodimer forming a stable octameric structure. CD3D-CD3E and CD3G-CD3E heterodimers preferentially associate with TR alpha and TR beta chains, respectively. The association of the CD247 homodimer is the last step of TcR assembly in the endoplasmic reticulum and is required for transport to the cell surface.

It localises to the cell membrane. Its function is as follows. V region of the variable domain of T cell receptor (TR) alpha chain that participates in the antigen recognition. Alpha-beta T cell receptors are antigen specific receptors which are essential to the immune response and are present on the cell surface of T lymphocytes. Recognize peptide-major histocompatibility (MH) (pMH) complexes that are displayed by antigen presenting cells (APC), a prerequisite for efficient T cell adaptive immunity against pathogens. Binding of alpha-beta TR to pMH complex initiates TR-CD3 clustering on the cell surface and intracellular activation of LCK that phosphorylates the ITAM motifs of CD3G, CD3D, CD3E and CD247 enabling the recruitment of ZAP70. In turn ZAP70 phosphorylates LAT, which recruits numerous signaling molecules to form the LAT signalosome. The LAT signalosome propagates signal branching to three major signaling pathways, the calcium, the mitogen-activated protein kinase (MAPK) kinase and the nuclear factor NF-kappa-B (NF-kB) pathways, leading to the mobilization of transcription factors that are critical for gene expression and essential for T cell growth and differentiation. The T cell repertoire is generated in the thymus, by V-(D)-J rearrangement. This repertoire is then shaped by intrathymic selection events to generate a peripheral T cell pool of self-MH restricted, non-autoaggressive T cells. Post-thymic interaction of alpha-beta TR with the pMH complexes shapes TR structural and functional avidity. The protein is T cell receptor alpha variable 26-2 of Homo sapiens (Human).